The following is a 248-amino-acid chain: 2,3-bisphosphoglycerate-dependent phosphoglycerate mutase (248 aa).

Residues 10–17, 23–24, arginine 62, 89–92, lysine 100, 116–117, and 183–184 each bind substrate; these read RHGQSQWN, TG, ERHY, RR, and GN. Histidine 11 acts as the Tele-phosphohistidine intermediate in catalysis. The Proton donor/acceptor role is filled by glutamate 89.

The protein belongs to the phosphoglycerate mutase family. BPG-dependent PGAM subfamily.

The catalysed reaction is (2R)-2-phosphoglycerate = (2R)-3-phosphoglycerate. It functions in the pathway carbohydrate degradation; glycolysis; pyruvate from D-glyceraldehyde 3-phosphate: step 3/5. Catalyzes the interconversion of 2-phosphoglycerate and 3-phosphoglycerate. The protein is 2,3-bisphosphoglycerate-dependent phosphoglycerate mutase of Corynebacterium kroppenstedtii (strain DSM 44385 / JCM 11950 / CIP 105744 / CCUG 35717).